The chain runs to 750 residues: Photosystem I P700 chlorophyll a apoprotein A1 (750 aa).

The next 8 membrane-spanning stretches (helical) occupy residues 70–93 (VFSA…FHGA), 156–179 (LYCT…FHYH), 195–219 (LNHH…HVSL), 291–309 (IAHH…GHMY), 346–369 (WHAQ…HHMY), 385–411 (LSLF…IFMV), 433–455 (AIIS…LYIH), and 531–549 (FLVH…LILL). [4Fe-4S] cluster contacts are provided by C573 and C582. Helical transmembrane passes span 589–610 (HVFL…HFSW) and 664–686 (LSAY…MFLF). H675 contacts chlorophyll a'. Residues M683 and Y691 each coordinate chlorophyll a. W692 lines the phylloquinone pocket. A helical membrane pass occupies residues 724–744 (AVGVTHYLLGGIATTWAFFLA).

It belongs to the PsaA/PsaB family. As to quaternary structure, the PsaA/B heterodimer binds the P700 chlorophyll special pair and subsequent electron acceptors. PSI consists of a core antenna complex that captures photons, and an electron transfer chain that converts photonic excitation into a charge separation. The eukaryotic PSI reaction center is composed of at least 11 subunits. It depends on P700 is a chlorophyll a/chlorophyll a' dimer, A0 is one or more chlorophyll a, A1 is one or both phylloquinones and FX is a shared 4Fe-4S iron-sulfur center. as a cofactor.

The protein resides in the plastid. It is found in the chloroplast thylakoid membrane. It carries out the reaction reduced [plastocyanin] + hnu + oxidized [2Fe-2S]-[ferredoxin] = oxidized [plastocyanin] + reduced [2Fe-2S]-[ferredoxin]. Its function is as follows. PsaA and PsaB bind P700, the primary electron donor of photosystem I (PSI), as well as the electron acceptors A0, A1 and FX. PSI is a plastocyanin-ferredoxin oxidoreductase, converting photonic excitation into a charge separation, which transfers an electron from the donor P700 chlorophyll pair to the spectroscopically characterized acceptors A0, A1, FX, FA and FB in turn. Oxidized P700 is reduced on the lumenal side of the thylakoid membrane by plastocyanin. The protein is Photosystem I P700 chlorophyll a apoprotein A1 of Arabidopsis thaliana (Mouse-ear cress).